Reading from the N-terminus, the 524-residue chain is Probable pectinesterase/pectinesterase inhibitor 19 (524 aa).

An N-terminal signal peptide occupies residues M1–K22. A pectinesterase inhibitor 19 region spans residues E23–L172. Residues D215–E510 form a pectinesterase 19 region. N265 and N281 each carry an N-linked (GlcNAc...) asparagine glycan. T290 is a substrate binding site. D343 (proton donor; for pectinesterase activity) is an active-site residue. Residues C357 and C377 are joined by a disulfide bond. D364 acts as the Nucleophile; for pectinesterase activity in catalysis. N-linked (GlcNAc...) asparagine glycosylation is present at N412. The substrate site is built by R430 and W432.

The protein in the N-terminal section; belongs to the PMEI family. It in the C-terminal section; belongs to the pectinesterase family. As to expression, expressed in siliques, but not in flower buds.

The protein localises to the secreted. It is found in the cell wall. The catalysed reaction is [(1-&gt;4)-alpha-D-galacturonosyl methyl ester](n) + n H2O = [(1-&gt;4)-alpha-D-galacturonosyl](n) + n methanol + n H(+). It functions in the pathway glycan metabolism; pectin degradation; 2-dehydro-3-deoxy-D-gluconate from pectin: step 1/5. Functionally, acts in the modification of cell walls via demethylesterification of cell wall pectin. In Arabidopsis thaliana (Mouse-ear cress), this protein is Probable pectinesterase/pectinesterase inhibitor 19 (PME19).